The sequence spans 203 residues: Molybdenum cofactor guanylyltransferase (203 aa).

Residues 12-14 (LAG), lysine 25, asparagine 53, aspartate 71, and aspartate 101 contribute to the GTP site. Aspartate 101 contacts Mg(2+).

Belongs to the MobA family. As to quaternary structure, monomer. Mg(2+) is required as a cofactor.

It localises to the cytoplasm. The enzyme catalyses Mo-molybdopterin + GTP + H(+) = Mo-molybdopterin guanine dinucleotide + diphosphate. Its function is as follows. Transfers a GMP moiety from GTP to Mo-molybdopterin (Mo-MPT) cofactor (Moco or molybdenum cofactor) to form Mo-molybdopterin guanine dinucleotide (Mo-MGD) cofactor. The chain is Molybdenum cofactor guanylyltransferase from Cupriavidus metallidurans (strain ATCC 43123 / DSM 2839 / NBRC 102507 / CH34) (Ralstonia metallidurans).